Consider the following 747-residue polypeptide: Elongation factor G, mitochondrial (747 aa).

A mitochondrion-targeting transit peptide spans 1–32 (MTLITRVLNGNLPLRLSTLKAARQLQCGYSSH). The 278-residue stretch at 42–319 (ERIRNIGISA…AVVDYLPNPG (278 aa)) folds into the tr-type G domain. Residues 51 to 58 (AHIDSGKT), 118 to 122 (DTPGH), and 172 to 175 (NKLD) each bind GTP.

This sequence belongs to the TRAFAC class translation factor GTPase superfamily. Classic translation factor GTPase family. EF-G/EF-2 subfamily.

It is found in the mitochondrion. The protein operates within protein biosynthesis; polypeptide chain elongation. Functionally, mitochondrial GTPase that catalyzes the GTP-dependent ribosomal translocation step during translation elongation. During this step, the ribosome changes from the pre-translocational (PRE) to the post-translocational (POST) state as the newly formed A-site-bound peptidyl-tRNA and P-site-bound deacylated tRNA move to the P and E sites, respectively. Catalyzes the coordinated movement of the two tRNA molecules, the mRNA and conformational changes in the ribosome. Essential during development as it acts as a retrograde signal from mitochondria to the nucleus to slow down cell proliferation if mitochondrial energy output is low. The chain is Elongation factor G, mitochondrial from Drosophila mojavensis (Fruit fly).